The chain runs to 316 residues: Aspartate carbamoyltransferase catalytic subunit (316 aa).

Carbamoyl phosphate-binding residues include Arg-66 and Thr-67. Residue Lys-94 coordinates L-aspartate. Carbamoyl phosphate is bound by residues Arg-116, His-146, and Gln-149. L-aspartate is bound by residues Arg-180 and Arg-235. Carbamoyl phosphate contacts are provided by Gly-276 and Pro-277.

This sequence belongs to the aspartate/ornithine carbamoyltransferase superfamily. ATCase family. Heterododecamer (2C3:3R2) of six catalytic PyrB chains organized as two trimers (C3), and six regulatory PyrI chains organized as three dimers (R2).

The catalysed reaction is carbamoyl phosphate + L-aspartate = N-carbamoyl-L-aspartate + phosphate + H(+). It functions in the pathway pyrimidine metabolism; UMP biosynthesis via de novo pathway; (S)-dihydroorotate from bicarbonate: step 2/3. Functionally, catalyzes the condensation of carbamoyl phosphate and aspartate to form carbamoyl aspartate and inorganic phosphate, the committed step in the de novo pyrimidine nucleotide biosynthesis pathway. This Stenotrophomonas maltophilia (strain K279a) protein is Aspartate carbamoyltransferase catalytic subunit.